The primary structure comprises 178 residues: RNA-binding protein (178 aa).

A disordered region spans residues 108–178 (SGFQKPKIGS…KGKGRRGGKR (71 aa)). Positions 168–178 (SKGKGRRGGKR) are enriched in basic residues.

Belongs to the phytoreovirus RNA-binding protein family.

The protein localises to the host cytoplasm. In terms of biological role, constituent of viral factories. Binds to ssRNA and dsRNA. The polypeptide is RNA-binding protein (Wound tumor virus (strain NJ) (WTV)).